The following is a 407-amino-acid chain: Arginine deiminase (407 aa).

Cys-397 serves as the catalytic Amidino-cysteine intermediate.

This sequence belongs to the arginine deiminase family.

It localises to the cytoplasm. The enzyme catalyses L-arginine + H2O = L-citrulline + NH4(+). The protein operates within amino-acid degradation; L-arginine degradation via ADI pathway; carbamoyl phosphate from L-arginine: step 1/2. The chain is Arginine deiminase from Vibrio parahaemolyticus serotype O3:K6 (strain RIMD 2210633).